A 391-amino-acid polypeptide reads, in one-letter code: Serpin B13 (391 aa).

It belongs to the serpin family. Ov-serpin subfamily. As to expression, skin specific.

It localises to the cytoplasm. Functionally, may play a role in the proliferation or differentiation of keratinocytes. In Homo sapiens (Human), this protein is Serpin B13 (SERPINB13).